The chain runs to 234 residues: Large ribosomal subunit protein uL1 (234 aa).

The protein belongs to the universal ribosomal protein uL1 family. As to quaternary structure, part of the 50S ribosomal subunit.

In terms of biological role, binds directly to 23S rRNA. The L1 stalk is quite mobile in the ribosome, and is involved in E site tRNA release. Protein L1 is also a translational repressor protein, it controls the translation of the L11 operon by binding to its mRNA. The polypeptide is Large ribosomal subunit protein uL1 (Edwardsiella ictaluri (strain 93-146)).